A 447-amino-acid chain; its full sequence is GTPase Der (447 aa).

2 EngA-type G domains span residues 3–167 (PVIA…VQER) and 181–354 (VKIA…AAAM). GTP contacts are provided by residues 9–16 (GRPNVGKS), 56–60 (DTGGF), 119–122 (NKAE), 187–194 (GRPNVGKS), 234–238 (DTAGL), and 299–302 (NKWD). Positions 355–439 (VKLPTPQLTR…PLRIEFRTNK (85 aa)) constitute a KH-like domain.

Belongs to the TRAFAC class TrmE-Era-EngA-EngB-Septin-like GTPase superfamily. EngA (Der) GTPase family. In terms of assembly, associates with the 50S ribosomal subunit.

GTPase that plays an essential role in the late steps of ribosome biogenesis. This Cupriavidus taiwanensis (strain DSM 17343 / BCRC 17206 / CCUG 44338 / CIP 107171 / LMG 19424 / R1) (Ralstonia taiwanensis (strain LMG 19424)) protein is GTPase Der.